The primary structure comprises 458 residues: F-box/WD repeat-containing protein 9 (458 aa).

The residue at position 1 (methionine 1) is an N-acetylmethionine. Residues 1 to 28 (MELPPGPRDDPHAWDDDSDPELEPDTDA) are disordered. A compositionally biased stretch (acidic residues) spans 16–28 (DDSDPELEPDTDA). Phosphoserine is present on residues serine 18 and serine 59. The region spanning 76 to 123 (VPGLLSLPPELLLEICAYLDARLVLHVLPRVCHALRDLVRDRVTWRLR) is the F-box domain. WD repeat units lie at residues 171–210 (GHFA…VEPS), 224–261 (THKG…QQFG), 264–301 (KGKA…ALLK), 305–342 (LHSS…VLQR), 344–381 (QLDS…FQLV), 387–424 (GHRS…RTIC), and 427–458 (SHHN…RLQA).

Interacts with SKP1 and CUL1.

In terms of biological role, substrate-recognition component of the SCF (SKP1-CUL1-F-box protein)-type E3 ubiquitin ligase complex. This chain is F-box/WD repeat-containing protein 9 (FBXW9), found in Bos taurus (Bovine).